The primary structure comprises 999 residues: Desmoglein-3 (999 aa).

An N-terminal signal peptide occupies residues 1 to 23 (MMGLFPRTTGALAIFVVVILVHG). Positions 24 to 49 (ELRIETKGQYDEEEMTMQQAKRRQKR) are excised as a propeptide. Cadherin domains follow at residues 50-158 (EWVK…PVFS), 159-268 (QQIF…PMFR), 269-383 (DSQY…GIAF), and 386-499 (ASKT…VLEK). The Extracellular portion of the chain corresponds to 50–615 (EWVKFAKPCR…TRYGRPHSGR (566 aa)). Residues Asn-110 and Asn-180 are each glycosylated (N-linked (GlcNAc...) asparagine). N-linked (GlcNAc...) asparagine glycosylation is found at Asn-459 and Asn-545. The helical transmembrane segment at 616-640 (LGPAAIGLLLLGLLLLLLAPLLLLT) threads the bilayer. Residues 641–999 (CDCGAGSTGG…CTEDPCSRLI (359 aa)) lie on the Cytoplasmic side of the membrane. The tract at residues 642 to 714 (DCGAGSTGGV…NTYARGTAVE (73 aa)) is required for interaction with CTNND1 and localization at cell-cell junctions. Desmoglein repeat repeat units lie at residues 910-935 (LSTSGSVQPAVSIPDPLQHGNYLVTE) and 936-966 (TYSASGSLVQPSTAGFDPLLTQNVIVTERVI).

Homodimer. Part of a complex that contains DSG3, PKP1, YAP1 and YWHAG; the complex is required for localization of DSG3 and YAP1 to the cell membrane in keratinocytes. Interacts with PKP2. Interacts with CTNND1; the interaction facilitates DSG3 localization and retention at cell-cell junctions. Interacts with CDH1; the interaction is required for CDH1 localization to developing adherens junctions. Interacts with RAC1; the interaction is required for DSG3 translocation to cell-cell junctions, organization of cortical F-actin bundles and actin anchoring at cell-cell junctions. Interacts with DSC3; the interaction may limit the interaction of DSC3 with p38MAPK family members and therefore repress p38MAPK signaling activation. As to expression, expressed throughout the basal and spinous layer of the epidermis with weak expression in the granular layer (at protein level). Expressed in skin and mucosa (at protein level). Expressed in the basal layer of the outer root sheath of the telogen hair club, specifically at the cell membrane between the apex of the cells and the surrounding hair club (at protein level). Expression is less abundant between the lateral margins of the outer root sheath basal cells (at protein level). Also expressed in the tongue, tonsil and esophagus.

The protein resides in the cell membrane. The protein localises to the cell junction. It is found in the desmosome. It localises to the cytoplasm. Its subcellular location is the tight junction. Functionally, a component of desmosome cell-cell junctions which are required for positive regulation of cellular adhesion. Required for adherens and desmosome junction assembly in response to mechanical force in keratinocytes. Required for desmosome-mediated cell-cell adhesion of cells surrounding the telogen hair club and the basal layer of the outer root sheath epithelium, consequently is essential for the anchoring of telogen hairs in the hair follicle. Required for the maintenance of the epithelial barrier via promoting desmosome-mediated intercellular attachment of suprabasal epithelium to basal cells. May play a role in the protein stability of the desmosome plaque components DSP, JUP, PKP1, PKP2 and PKP3. Required for YAP1 localization at the plasma membrane in keratinocytes in response to mechanical strain, via the formation of an interaction complex composed of DSG3, PKP1 and YWHAG. May also be involved in the positive regulation of YAP1 target gene transcription and as a result cell proliferation. Positively regulates cellular contractility and cell junction formation via organization of cortical F-actin bundles and anchoring of actin to tight junctions, in conjunction with RAC1. The cytoplasmic pool of DSG3 is required for the localization of CDH1 and CTNNB1 at developing adherens junctions, potentially via modulation of SRC activity. Inhibits keratinocyte migration via suppression of p38MAPK signaling, may therefore play a role in moderating wound healing. The protein is Desmoglein-3 of Homo sapiens (Human).